We begin with the raw amino-acid sequence, 337 residues long: GTP 3',8-cyclase (337 aa).

A Radical SAM core domain is found at 17–243; the sequence is PFQRQYYYLR…HKSHTDGPAK (227 aa). Arg-26 lines the GTP pocket. Residues Cys-33 and Cys-37 each coordinate [4Fe-4S] cluster. An S-adenosyl-L-methionine-binding site is contributed by Tyr-39. Position 40 (Cys-40) interacts with [4Fe-4S] cluster. Arg-76 lines the GTP pocket. Gly-80 serves as a coordination point for S-adenosyl-L-methionine. Thr-107 lines the GTP pocket. Position 131 (Ser-131) interacts with S-adenosyl-L-methionine. Lys-168 is a GTP binding site. An S-adenosyl-L-methionine-binding site is contributed by Met-202. Cys-265 and Cys-268 together coordinate [4Fe-4S] cluster. 270 to 272 is a GTP binding site; sequence RLR. Position 282 (Cys-282) interacts with [4Fe-4S] cluster.

This sequence belongs to the radical SAM superfamily. MoaA family. Monomer and homodimer. It depends on [4Fe-4S] cluster as a cofactor.

It carries out the reaction GTP + AH2 + S-adenosyl-L-methionine = (8S)-3',8-cyclo-7,8-dihydroguanosine 5'-triphosphate + 5'-deoxyadenosine + L-methionine + A + H(+). It participates in cofactor biosynthesis; molybdopterin biosynthesis. Functionally, catalyzes the cyclization of GTP to (8S)-3',8-cyclo-7,8-dihydroguanosine 5'-triphosphate. The chain is GTP 3',8-cyclase from Haemophilus influenzae (strain 86-028NP).